A 911-amino-acid polypeptide reads, in one-letter code: SH3 and PX domain-containing protein 2B (911 aa).

A PX domain is found at 5-129 (RSIVEVKVLD…QFFETRPEDL (125 aa)). Tyr-25 bears the Phosphotyrosine mark. SH3 domains are found at residues 152 to 211 (MVLE…GQDG) and 221 to 280 (EEEE…KNSG). Residues 275 to 366 (LKKNSGEPLP…GLNLPKPPIP (92 aa)) form a disordered region. Phosphoserine is present on residues Ser-279 and Ser-291. Pro residues predominate over residues 282-292 (PLPPKPGPGSP). Positions 311–337 (GREKELLSSQRDGRFEGRPVPDGDAKQ) are enriched in basic and acidic residues. A compositionally biased stretch (basic residues) spans 338 to 347 (RSPKMRQRPP). The SH3 3 domain maps to 368–427 (QVEEEYYTIAEFQTTIPDGISFQAGLKVEVIEKNLSGWWYIQIEDKEGWAPATFIDKYKK). Residues 458-834 (NTGSEATGPS…GPWGTGKIGE (377 aa)) are disordered. Basic and acidic residues-rich tracts occupy residues 486-499 (KDWK…RKAS), 517-548 (EEKP…RTEQ), 571-586 (PARD…DKSR), 598-609 (CGHKVLAKEVKK), and 618-628 (SKTDLPEEKPD). A phosphoserine mark is found at Ser-499 and Ser-528. Composition is skewed to pro residues over residues 643 to 653 (RPKPAPSPKTE) and 756 to 766 (VVPPRRPPPPK). The span at 822–831 (GSLGPWGTGK) shows a compositional bias: gly residues. Ser-843 bears the Phosphoserine mark. An SH3 4 domain is found at 850–911 (LKDSLYVAVA…IPSNYLRKKP (62 aa)).

This sequence belongs to the SH3PXD2 family. As to quaternary structure, interacts with ADAM15. Interacts with NOXO1. Interacts (via SH3 domains) with NOXA1; the interaction is direct. Interacts with FASLG. Phosphorylated in SRC-transformed cells. Expressed in fibroblasts.

The protein resides in the cytoplasm. It is found in the cell projection. It localises to the podosome. Functionally, adapter protein involved in invadopodia and podosome formation and extracellular matrix degradation. Binds matrix metalloproteinases (ADAMs), NADPH oxidases (NOXs) and phosphoinositides. Acts as an organizer protein that allows NOX1- or NOX3-dependent reactive oxygen species (ROS) generation and ROS localization. Plays a role in mitotic clonal expansion during the immediate early stage of adipocyte differentiation. In Homo sapiens (Human), this protein is SH3 and PX domain-containing protein 2B (SH3PXD2B).